Reading from the N-terminus, the 231-residue chain is Large ribosomal subunit protein uL1 (231 aa).

The protein belongs to the universal ribosomal protein uL1 family. As to quaternary structure, part of the 50S ribosomal subunit.

Binds directly to 23S rRNA. The L1 stalk is quite mobile in the ribosome, and is involved in E site tRNA release. In terms of biological role, protein L1 is also a translational repressor protein, it controls the translation of the L11 operon by binding to its mRNA. The sequence is that of Large ribosomal subunit protein uL1 from Dechloromonas aromatica (strain RCB).